The primary structure comprises 438 residues: uncharacterized protein (438 aa).

Helical transmembrane passes span 22-42 (VSPI…GGFG), 59-79 (SAAL…AGLF), 89-109 (IVKG…MLIA), 137-157 (MVMA…TPWG), 174-194 (FFVP…FLAF), 237-257 (LIYL…LGTK), 258-278 (HPSV…YPNV), 292-312 (AITV…LSGT), 330-350 (MGGF…FVLS), 356-376 (FGMV…PVEI), 380-400 (SIMG…VLLV), and 418-438 (AVIT…ITIL).

It belongs to the CitM (TC 2.A.11) transporter family.

It is found in the cell membrane. Its function is as follows. Transports the free citrate anion. This is an uncharacterized protein from Bacillus subtilis (strain 168).